We begin with the raw amino-acid sequence, 206 residues long: GTP-binding protein YPT1 (206 aa).

Methionine 1 carries the N-acetylmethionine modification. GTP is bound by residues 17–23 (SGVGKSC), 33–40 (YTNDYIST), glycine 66, and 121–124 (NKCD). Cysteine 23 is lipidated: S-palmitoyl cysteine. The Effector region motif lies at 37–45 (YISTIGVDF). The interval 63 to 80 (DTAGQERFRTITSSYYRG) is interaction with GDI1. A lipid anchor (S-palmitoyl cysteine) is attached at cysteine 123. Lysine 144 is covalently cross-linked (Glycyl lysine isopeptide (Lys-Gly) (interchain with G-Cter in ubiquitin)). 152 to 153 (AL) contacts GTP. 2 positions are modified to phosphoserine: serine 172 and serine 174. Residues 173 to 206 (MSQQNLNETTQKKEDKGNVNLKGQSLTNTGGGCC) are disordered. Residues 189 to 195 (GNVNLKG) form an interaction with GDI1 region. 2 S-geranylgeranyl cysteine lipidation sites follow: cysteine 205 and cysteine 206.

Belongs to the small GTPase superfamily. Rab family. In terms of assembly, forms a complex with the Rab escort protein (REP) MRS6, which is recognized by Rab geranylgeranyltransferase BET2-BET4. Interacts with the Rab GDP dissociation inhibitor GDI1, which can retrieve from and deliver to membranes the GDP-bound and prenylated form of YPT1. Interacts with YIP1, which is required for proper membrane targeting of prenylated YPT1. Interacts with YIF1, YIP3, YIP4 and YIP5. In terms of processing, prenylation is required for interaction with GDI1 and YIP1.

Its subcellular location is the endoplasmic reticulum membrane. The protein resides in the golgi apparatus membrane. It is found in the cytoplasm. It localises to the preautophagosomal structure membrane. Its activity is regulated as follows. Rab activation is generally mediated by a guanine exchange factor (GEF), while inactivation through hydrolysis of bound GTP is catalyzed by a GTPase activating protein (GAP). YPT1 is activated by the GEFs DSS4 and TRAPP complex, and inactivated by GAPs GYP1, GYP5 and GYP8. Its function is as follows. The small GTPases Rab are key regulators of intracellular membrane trafficking, from the formation of transport vesicles to their fusion with membranes. Rabs cycle between an inactive GDP-bound form and an active GTP-bound form that is able to recruit to membranes different set of downstream effectors directly responsible for vesicle formation, movement, tethering and fusion. YPT1 regulates the trafficking of secretory vesicles from the endoplasmic reticulum (ER) to the Golgi. Vesicular transport depends on shuttling of YPT1 between membrane and cytosol by GDI1, probably by recycling it to its membrane of origin after a vesicle fusion event. Plays a role in the initial events of the autophagic vacuole development which take place at specialized regions of the endoplasmic reticulum. Also involved in the recycling of membrane proteins. This chain is GTP-binding protein YPT1 (YPT1), found in Saccharomyces cerevisiae (strain ATCC 204508 / S288c) (Baker's yeast).